A 262-amino-acid polypeptide reads, in one-letter code: Zinc import ATP-binding protein ZnuC (262 aa).

The 217-residue stretch at 4-220 (LNLSGVRLSH…PEYLALFGPR (217 aa)) folds into the ABC transporter domain. 36 to 43 (GPNGAGKS) contacts ATP. The interval 238 to 262 (ADGSVLPLAEGGGEPHTHGPGCRHG) is disordered.

It belongs to the ABC transporter superfamily. Zinc importer (TC 3.A.1.15.5) family. In terms of assembly, the complex is composed of two ATP-binding proteins (ZnuC), two transmembrane proteins (ZnuB) and a solute-binding protein (ZnuA).

It is found in the cell inner membrane. It carries out the reaction Zn(2+)(out) + ATP(in) + H2O(in) = Zn(2+)(in) + ADP(in) + phosphate(in) + H(+)(in). Part of the ABC transporter complex ZnuABC involved in zinc import. Responsible for energy coupling to the transport system. This chain is Zinc import ATP-binding protein ZnuC, found in Paramagnetospirillum magneticum (strain ATCC 700264 / AMB-1) (Magnetospirillum magneticum).